Reading from the N-terminus, the 520-residue chain is GMP synthase [glutamine-hydrolyzing] (520 aa).

In terms of domain architecture, Glutamine amidotransferase type-1 spans 3-200 (AIAIIDFGSQ…FLDIANCKRD (198 aa)). The active-site Nucleophile is the Cys84. Active-site residues include His175 and Glu177. The GMPS ATP-PPase domain maps to 201–386 (WTMKSIIEKQ…IGLSNEIIFQ (186 aa)). 228–234 (SGGVDSS) contributes to the ATP binding site.

Homodimer.

It catalyses the reaction XMP + L-glutamine + ATP + H2O = GMP + L-glutamate + AMP + diphosphate + 2 H(+). It participates in purine metabolism; GMP biosynthesis; GMP from XMP (L-Gln route): step 1/1. Functionally, catalyzes the synthesis of GMP from XMP. The protein is GMP synthase [glutamine-hydrolyzing] of Wolbachia sp. subsp. Brugia malayi (strain TRS).